The primary structure comprises 121 residues: Putative iron-sulfur cluster insertion protein ErpA (121 aa).

C49, C113, and C115 together coordinate iron-sulfur cluster.

The protein belongs to the HesB/IscA family. In terms of assembly, homodimer. It depends on iron-sulfur cluster as a cofactor.

In terms of biological role, required for insertion of 4Fe-4S clusters. The protein is Putative iron-sulfur cluster insertion protein ErpA of Nitrosomonas europaea (strain ATCC 19718 / CIP 103999 / KCTC 2705 / NBRC 14298).